Here is a 245-residue protein sequence, read N- to C-terminus: Biosynthetic peptidoglycan transglycosylase (245 aa).

The helical transmembrane segment at 20 to 42 threads the bilayer; it reads VYAGSVFAGAWLATQLFYLVQIA.

It belongs to the glycosyltransferase 51 family.

It is found in the cell inner membrane. It catalyses the reaction [GlcNAc-(1-&gt;4)-Mur2Ac(oyl-L-Ala-gamma-D-Glu-L-Lys-D-Ala-D-Ala)](n)-di-trans,octa-cis-undecaprenyl diphosphate + beta-D-GlcNAc-(1-&gt;4)-Mur2Ac(oyl-L-Ala-gamma-D-Glu-L-Lys-D-Ala-D-Ala)-di-trans,octa-cis-undecaprenyl diphosphate = [GlcNAc-(1-&gt;4)-Mur2Ac(oyl-L-Ala-gamma-D-Glu-L-Lys-D-Ala-D-Ala)](n+1)-di-trans,octa-cis-undecaprenyl diphosphate + di-trans,octa-cis-undecaprenyl diphosphate + H(+). The protein operates within cell wall biogenesis; peptidoglycan biosynthesis. In terms of biological role, peptidoglycan polymerase that catalyzes glycan chain elongation from lipid-linked precursors. The sequence is that of Biosynthetic peptidoglycan transglycosylase from Burkholderia ambifaria (strain ATCC BAA-244 / DSM 16087 / CCUG 44356 / LMG 19182 / AMMD) (Burkholderia cepacia (strain AMMD)).